A 500-amino-acid chain; its full sequence is MLTIFIVTATLFAILYFYFTRNFNYWKDRNVVGPEPTVFFGNIMESVIRRKHLIMIYKDIYEAFPKEKVVGIYRMTTPCLLLRDLDVIKHVMIKDFDLFNDRGVEFSEEGLGLNIFHADGDRWRVLRQCFTPLFTSGKLKNMLNLMSDRGDKFIKMVEKFCDKEPEQQIIPLVRKFTMASITTCAFGMELDEEMIETLDKLDSLIFTTSYGNEIDMMYPGILKKLNSSIFSKMIAPFFDNLTKTIIEQRGGKPTNRKDLMDLILELRQKKAIEPMKKTHDEQVTTLELTDSVIAAQTFIFYAAGYETSASTMSFLLFELAENPDIQEKVIAEVDETLKRHNGEITYDTLSEMTYLTQVFHETLRKYPVADILLRNAKADYAVPGTNVTLKKGQTVVVSGFGIHYDPKYYPDPEKFDPERFSPENVRNRHPCAYIPFGAGQRKCLGMRFGQWQVQVCIIKLLSKFRFEPSTKTMSEFNYDPKRLLVYPKSGIFLNIIPRNY.

C443 provides a ligand contact to heme.

This sequence belongs to the cytochrome P450 family. It depends on heme as a cofactor.

It is found in the endoplasmic reticulum membrane. The protein resides in the microsome membrane. It carries out the reaction an organic molecule + reduced [NADPH--hemoprotein reductase] + O2 = an alcohol + oxidized [NADPH--hemoprotein reductase] + H2O + H(+). In terms of biological role, enables the insect to feed on furanocoumarin-producing plants and evolved as an adaptation for detoxification of xanthotoxin and other furanocoumarins. This isozyme metabolizes isopimpinellin, imperatorin, and bergapten at high rates, xanthotoxin and psoralen at intermediate rates and angelicin, sphondin, and trioxsalen only at very low rates. In Papilio glaucus (Eastern tiger swallowtail butterfly), this protein is Cytochrome P450 6B4 (CYP6B4).